A 581-amino-acid chain; its full sequence is Metal transporter Nramp7.1 (581 aa).

Residues Asn11 and Asn19 are each glycosylated (N-linked (GlcNAc...) asparagine). 7 helical membrane passes run Phe57–Leu77, Glu90–Ala110, Tyr146–Ile166, Leu181–Val201, Leu224–Val244, Ile270–Leu290, and Tyr307–Ile327. N-linked (GlcNAc...) asparagine glycosylation is present at Asn338. Transmembrane regions (helical) follow at residues Ile370–Gly390, Leu409–Ser429, Leu434–Ile454, Ile473–Tyr493, and Val513–Leu533. The tract at residues Pro551–Glu581 is disordered. Over residues Glu564–Leu574 the composition is skewed to basic and acidic residues.

This sequence belongs to the NRAMP (TC 2.A.55) family.

The protein resides in the membrane. Probable divalent metal transporter. This chain is Metal transporter Nramp7.1, found in Populus trichocarpa (Western balsam poplar).